The chain runs to 92 residues: Large ribosomal subunit protein eL43z (92 aa).

The C4-type zinc finger occupies 39–60 (CEFCGKFAVKRKAVGIWGCKDC).

It belongs to the eukaryotic ribosomal protein eL43 family.

The chain is Large ribosomal subunit protein eL43z from Oryza sativa subsp. japonica (Rice).